Here is a 275-residue protein sequence, read N- to C-terminus: tRNA pseudouridine synthase A (275 aa).

Asp56 serves as the catalytic Nucleophile. Tyr114 provides a ligand contact to substrate.

This sequence belongs to the tRNA pseudouridine synthase TruA family. As to quaternary structure, homodimer.

It catalyses the reaction uridine(38/39/40) in tRNA = pseudouridine(38/39/40) in tRNA. In terms of biological role, formation of pseudouridine at positions 38, 39 and 40 in the anticodon stem and loop of transfer RNAs. The protein is tRNA pseudouridine synthase A of Polynucleobacter asymbioticus (strain DSM 18221 / CIP 109841 / QLW-P1DMWA-1) (Polynucleobacter necessarius subsp. asymbioticus).